The chain runs to 311 residues: GTPase Era (311 aa).

Residues 18-185 form the Era-type G domain; sequence RSGFVALIGA…AKYLAESVPN (168 aa). Residues 26-33 form a G1 region; it reads GAPNAGKS. 26 to 33 is a GTP binding site; the sequence is GAPNAGKS. The tract at residues 52 to 56 is G2; sequence QTTRA. Residues 73-76 form a G3 region; sequence DTPG. GTP is bound by residues 73–77 and 135–138; these read DTPGI and NKVD. The G4 stretch occupies residues 135 to 138; the sequence is NKVD. The segment at 164-166 is G5; that stretch reads ISA. One can recognise a KH type-2 domain in the interval 216-293; sequence LHEELPYAST…HQFLFVKVRE (78 aa).

This sequence belongs to the TRAFAC class TrmE-Era-EngA-EngB-Septin-like GTPase superfamily. Era GTPase family. Monomer.

It is found in the cytoplasm. The protein resides in the cell inner membrane. In terms of biological role, an essential GTPase that binds both GDP and GTP, with rapid nucleotide exchange. Plays a role in 16S rRNA processing and 30S ribosomal subunit biogenesis and possibly also in cell cycle regulation and energy metabolism. This is GTPase Era from Brucella melitensis biotype 1 (strain ATCC 23456 / CCUG 17765 / NCTC 10094 / 16M).